Reading from the N-terminus, the 669-residue chain is DNA ligase (669 aa).

NAD(+) is bound by residues 34–38 (DAEYD), 83–84 (SL), and E113. Catalysis depends on K115, which acts as the N6-AMP-lysine intermediate. R136, E170, K286, and K310 together coordinate NAD(+). Residues C404, C407, C422, and C427 each coordinate Zn(2+). Residues 591–669 (IADSPFAGKT…EEALVKAISH (79 aa)) enclose the BRCT domain.

Belongs to the NAD-dependent DNA ligase family. LigA subfamily. Mg(2+) serves as cofactor. The cofactor is Mn(2+).

The enzyme catalyses NAD(+) + (deoxyribonucleotide)n-3'-hydroxyl + 5'-phospho-(deoxyribonucleotide)m = (deoxyribonucleotide)n+m + AMP + beta-nicotinamide D-nucleotide.. In terms of biological role, DNA ligase that catalyzes the formation of phosphodiester linkages between 5'-phosphoryl and 3'-hydroxyl groups in double-stranded DNA using NAD as a coenzyme and as the energy source for the reaction. It is essential for DNA replication and repair of damaged DNA. The sequence is that of DNA ligase from Halalkalibacterium halodurans (strain ATCC BAA-125 / DSM 18197 / FERM 7344 / JCM 9153 / C-125) (Bacillus halodurans).